An 859-amino-acid polypeptide reads, in one-letter code: DNA mismatch repair protein MutS (859 aa).

An ATP-binding site is contributed by 617–624 (GPNMGGKS). The interval 801-820 (TSLPHEVAPQAPGKPSVPQQ) is disordered.

This sequence belongs to the DNA mismatch repair MutS family.

This protein is involved in the repair of mismatches in DNA. It is possible that it carries out the mismatch recognition step. This protein has a weak ATPase activity. This Pseudomonas fluorescens (strain ATCC BAA-477 / NRRL B-23932 / Pf-5) protein is DNA mismatch repair protein MutS.